The primary structure comprises 357 residues: MPRPTVARIDLDALKHNFRRARELAGTAYAMAVVKADGYGHGIRSVADALAPETSRFAVACIEEAIAIRGAGHRHSVVLLQGTHQKDDLAECERSGFEPVLHCQQQLSWLGAGRSPRFWIKVNTGMNRLGFRPEELPEVMAGLEEAGLKHLAIGFVTHFACADDSDSEMTGLQTRIFERAVAPWPDLMRSVGNSAAHFRPNQPLYEWSRPGIMLYGASPMEGKTGAELGLCPAMTLQAPLITTRVVRAGESVGYGASWTASQDTRMGMVAIGYADGYPRHAGTGTPAAVRGQRIRLLGRVSMDMLAVDLSAVPEAREGDMVELWGKTVSVDEVATCAGTIGYELLTGVTSRVPRVHE.

Lys35 (proton acceptor; specific for D-alanine) is an active-site residue. Lys35 carries the post-translational modification N6-(pyridoxal phosphate)lysine. Substrate is bound at residue Arg128. Tyr254 serves as the catalytic Proton acceptor; specific for L-alanine. A substrate-binding site is contributed by Met302.

It belongs to the alanine racemase family. It depends on pyridoxal 5'-phosphate as a cofactor.

It carries out the reaction L-alanine = D-alanine. It participates in amino-acid biosynthesis; D-alanine biosynthesis; D-alanine from L-alanine: step 1/1. Functionally, catalyzes the interconversion of L-alanine and D-alanine. May also act on other amino acids. The sequence is that of Alanine racemase (alr) from Marinobacter nauticus (strain ATCC 700491 / DSM 11845 / VT8) (Marinobacter aquaeolei).